Here is a 129-residue protein sequence, read N- to C-terminus: uncharacterized protein (129 aa).

Positions 23 to 101 are disordered; the sequence is KASTSSESCQ…TAATRTTSKK (79 aa). 2 stretches are compositionally biased toward basic and acidic residues: residues 31–40 and 67–80; these read CQRRGVRDDT and EGDR…EKEP.

This is an uncharacterized protein from Ictaluridae (bullhead catfishes).